We begin with the raw amino-acid sequence, 629 residues long: tRNA uridine 5-carboxymethylaminomethyl modification enzyme MnmG (629 aa).

13-18 provides a ligand contact to FAD; that stretch reads GGGHAG. 273 to 287 serves as a coordination point for NAD(+); sequence GPRYCPSIEDKIHRF.

Belongs to the MnmG family. As to quaternary structure, homodimer. Heterotetramer of two MnmE and two MnmG subunits. It depends on FAD as a cofactor.

The protein localises to the cytoplasm. Its function is as follows. NAD-binding protein involved in the addition of a carboxymethylaminomethyl (cmnm) group at the wobble position (U34) of certain tRNAs, forming tRNA-cmnm(5)s(2)U34. The protein is tRNA uridine 5-carboxymethylaminomethyl modification enzyme MnmG of Shewanella baltica (strain OS155 / ATCC BAA-1091).